The chain runs to 166 residues: MAIKLEDKKAIVAEVNEAAKAGLSAVVADARGVTVGAMTGLRKEARAAGVYVKVVRNTLLKRAVEGTQFDVLNDVFKGPTLIAFSNEHPGAAARIFKEFAKGQDKFEIKAAAFEGKFLAANQIDVLASLPTREEGIAQLMSVIQGATSKLARTLAAIRDQKEAAAA.

Belongs to the universal ribosomal protein uL10 family. In terms of assembly, part of the ribosomal stalk of the 50S ribosomal subunit. The N-terminus interacts with L11 and the large rRNA to form the base of the stalk. The C-terminus forms an elongated spine to which L12 dimers bind in a sequential fashion forming a multimeric L10(L12)X complex.

Forms part of the ribosomal stalk, playing a central role in the interaction of the ribosome with GTP-bound translation factors. The polypeptide is Large ribosomal subunit protein uL10 (Stutzerimonas stutzeri (strain A1501) (Pseudomonas stutzeri)).